The following is a 351-amino-acid chain: Nicotinate-nucleotide--dimethylbenzimidazole phosphoribosyltransferase (351 aa).

The Proton acceptor role is filled by E313.

This sequence belongs to the CobT family.

The catalysed reaction is 5,6-dimethylbenzimidazole + nicotinate beta-D-ribonucleotide = alpha-ribazole 5'-phosphate + nicotinate + H(+). It functions in the pathway nucleoside biosynthesis; alpha-ribazole biosynthesis; alpha-ribazole from 5,6-dimethylbenzimidazole: step 1/2. Functionally, catalyzes the synthesis of alpha-ribazole-5'-phosphate from nicotinate mononucleotide (NAMN) and 5,6-dimethylbenzimidazole (DMB). This chain is Nicotinate-nucleotide--dimethylbenzimidazole phosphoribosyltransferase, found in Mycobacterium leprae (strain Br4923).